A 642-amino-acid polypeptide reads, in one-letter code: Mediator of RNA polymerase II transcription subunit 17 (642 aa).

The disordered stretch occupies residues A210–N232. Low complexity predominate over residues S220–N232.

The protein belongs to the Mediator complex subunit 17 family. As to quaternary structure, component of the Mediator complex, which includes at least CDK8, MED4, MED6, MED11, MED14, MED17, MED18, MED20, MED21, MED22, MED27, MED28, MED30 and MED31. Interacts with Hsf.

The protein localises to the nucleus. The protein resides in the chromosome. Its function is as follows. Component of the Mediator complex, a coactivator involved in the regulated transcription of nearly all RNA polymerase II-dependent genes. Mediator functions as a bridge to convey information from gene-specific regulatory proteins to the basal RNA polymerase II transcription machinery. Mediator is recruited to promoters by direct interactions with regulatory proteins and serves as a scaffold for the assembly of a functional preinitiation complex with RNA polymerase II and the general transcription factors. Required for activated transcription of the MtnA, MtnB and MtnD genes. Negatively regulates sex comb development. This chain is Mediator of RNA polymerase II transcription subunit 17 (MED17), found in Drosophila melanogaster (Fruit fly).